The sequence spans 258 residues: Octanoyltransferase (258 aa).

The BPL/LPL catalytic domain occupies 42–226 (NLGADTLLLL…AVVAALDGAL (185 aa)). Substrate contacts are provided by residues 80–87 (RGGKITWH), 156–158 (AIG), and 169–171 (GFS). Catalysis depends on Cys187, which acts as the Acyl-thioester intermediate.

Belongs to the LipB family.

It localises to the cytoplasm. It carries out the reaction octanoyl-[ACP] + L-lysyl-[protein] = N(6)-octanoyl-L-lysyl-[protein] + holo-[ACP] + H(+). Its pathway is protein modification; protein lipoylation via endogenous pathway; protein N(6)-(lipoyl)lysine from octanoyl-[acyl-carrier-protein]: step 1/2. Functionally, catalyzes the transfer of endogenously produced octanoic acid from octanoyl-acyl-carrier-protein onto the lipoyl domains of lipoate-dependent enzymes. Lipoyl-ACP can also act as a substrate although octanoyl-ACP is likely to be the physiological substrate. The chain is Octanoyltransferase from Rhodococcus opacus (strain B4).